The sequence spans 165 residues: Methylated-DNA--protein-cysteine methyltransferase (165 aa).

Cysteine 126 (nucleophile; methyl group acceptor) is an active-site residue.

Belongs to the MGMT family.

It localises to the cytoplasm. The enzyme catalyses a 6-O-methyl-2'-deoxyguanosine in DNA + L-cysteinyl-[protein] = S-methyl-L-cysteinyl-[protein] + a 2'-deoxyguanosine in DNA. It carries out the reaction a 4-O-methyl-thymidine in DNA + L-cysteinyl-[protein] = a thymidine in DNA + S-methyl-L-cysteinyl-[protein]. Involved in the cellular defense against the biological effects of O6-methylguanine (O6-MeG) and O4-methylthymine (O4-MeT) in DNA. Repairs the methylated nucleobase in DNA by stoichiometrically transferring the methyl group to a cysteine residue in the enzyme. This is a suicide reaction: the enzyme is irreversibly inactivated. The chain is Methylated-DNA--protein-cysteine methyltransferase from Mycolicibacterium paratuberculosis (strain ATCC BAA-968 / K-10) (Mycobacterium paratuberculosis).